A 142-amino-acid polypeptide reads, in one-letter code: Nucleoside diphosphate kinase (142 aa).

Positions 11, 59, 87, 93, 107, and 117 each coordinate ATP. His120 functions as the Pros-phosphohistidine intermediate in the catalytic mechanism.

The protein belongs to the NDK family. As to quaternary structure, homotetramer. Mg(2+) is required as a cofactor.

The protein localises to the cytoplasm. The catalysed reaction is a 2'-deoxyribonucleoside 5'-diphosphate + ATP = a 2'-deoxyribonucleoside 5'-triphosphate + ADP. It carries out the reaction a ribonucleoside 5'-diphosphate + ATP = a ribonucleoside 5'-triphosphate + ADP. Functionally, major role in the synthesis of nucleoside triphosphates other than ATP. The ATP gamma phosphate is transferred to the NDP beta phosphate via a ping-pong mechanism, using a phosphorylated active-site intermediate. The protein is Nucleoside diphosphate kinase of Aquifex aeolicus (strain VF5).